Here is a 55-residue protein sequence, read N- to C-terminus: Large ribosomal subunit protein bL32 (55 aa).

Positions 1-19 (MAVPKFKKSRANTRARRSQ) are enriched in basic residues. Positions 1–22 (MAVPKFKKSRANTRARRSQWKA) are disordered.

Belongs to the bacterial ribosomal protein bL32 family.

The chain is Large ribosomal subunit protein bL32 from Corynebacterium urealyticum (strain ATCC 43042 / DSM 7109).